A 153-amino-acid polypeptide reads, in one-letter code: Endoribonuclease YbeY (153 aa).

The Zn(2+) site is built by His114, His118, and His124.

The protein belongs to the endoribonuclease YbeY family. Requires Zn(2+) as cofactor.

It is found in the cytoplasm. Single strand-specific metallo-endoribonuclease involved in late-stage 70S ribosome quality control and in maturation of the 3' terminus of the 16S rRNA. This chain is Endoribonuclease YbeY, found in Shewanella putrefaciens (strain CN-32 / ATCC BAA-453).